Consider the following 133-residue polypeptide: MKKKHKRLLITSGIFCFLSCIVFFILTTLKENISFFYTVSEAIVLQNSQKLIRVGGMVVENSVIRSESEVIFQMTDFNKSVVVKYQGILPPMFSEKSGVVVQGKMFDNSTFLADTVFAKHDENYMPKVLKQIP.

At 1–7 (MKKKHKR) the chain is on the cytoplasmic side. The helical; Signal-anchor for type II membrane protein transmembrane segment at 8 to 28 (LLITSGIFCFLSCIVFFILTT) threads the bilayer. Over 29-133 (LKENISFFYT…YMPKVLKQIP (105 aa)) the chain is Periplasmic. Heme contacts are provided by His-120 and Tyr-124.

It belongs to the CcmE/CycJ family.

It localises to the cell inner membrane. Functionally, heme chaperone required for the biogenesis of c-type cytochromes. Transiently binds heme delivered by CcmC and transfers the heme to apo-cytochromes in a process facilitated by CcmF and CcmH. This Wolbachia sp. subsp. Drosophila simulans (strain wRi) protein is Cytochrome c-type biogenesis protein CcmE.